A 439-amino-acid chain; its full sequence is Ribosomal protein uS12 methylthiotransferase RimO (439 aa).

In terms of domain architecture, MTTase N-terminal spans 3–113 (HKVGFVSLGC…VVNAVHQHLP (111 aa)). Residues C12, C48, C77, C144, C148, and C151 each contribute to the [4Fe-4S] cluster site. The Radical SAM core domain occupies 130 to 367 (LTPRHYAYLK…MQVQAEISRN (238 aa)). The TRAM domain occupies 370 to 436 (KNKIGSTQTV…DYDLYGDLEY (67 aa)).

The protein belongs to the methylthiotransferase family. RimO subfamily. It depends on [4Fe-4S] cluster as a cofactor.

Its subcellular location is the cytoplasm. It carries out the reaction L-aspartate(89)-[ribosomal protein uS12]-hydrogen + (sulfur carrier)-SH + AH2 + 2 S-adenosyl-L-methionine = 3-methylsulfanyl-L-aspartate(89)-[ribosomal protein uS12]-hydrogen + (sulfur carrier)-H + 5'-deoxyadenosine + L-methionine + A + S-adenosyl-L-homocysteine + 2 H(+). Functionally, catalyzes the methylthiolation of an aspartic acid residue of ribosomal protein uS12. The chain is Ribosomal protein uS12 methylthiotransferase RimO from Legionella pneumophila (strain Corby).